The sequence spans 360 residues: Ubiquitin carboxyl-terminal hydrolase MIY1 (360 aa).

The Nucleophile role is filled by C28. Catalysis depends on H216, which acts as the Proton acceptor. The segment at 317–360 (KRKIHSHKKNSEIHAPVKKDKFKRRSSLLNAKASEKEKSECVVM) is disordered. Composition is skewed to basic and acidic residues over residues 325–335 (KNSEIHAPVKK) and 349–360 (ASEKEKSECVVM).

The protein belongs to the MINDY deubiquitinase family. FAM63 subfamily.

Its subcellular location is the cytoplasm. It catalyses the reaction Thiol-dependent hydrolysis of ester, thioester, amide, peptide and isopeptide bonds formed by the C-terminal Gly of ubiquitin (a 76-residue protein attached to proteins as an intracellular targeting signal).. Hydrolase that can specifically remove 'Lys-48'-linked conjugated ubiquitin from proteins. Has endodeubiquitinase activity. The chain is Ubiquitin carboxyl-terminal hydrolase MIY1 from Saccharomyces cerevisiae (strain ATCC 204508 / S288c) (Baker's yeast).